We begin with the raw amino-acid sequence, 82 residues long: Large ribosomal subunit protein bL27 (82 aa).

The disordered stretch occupies residues 1–54; it reads MAHKKGQGASRNGRDSESKRLGMKVGAGQRVSTGSILVRQRGTKWHPSQNVGRG.

It belongs to the bacterial ribosomal protein bL27 family.

The polypeptide is Large ribosomal subunit protein bL27 (Chlamydia caviae (strain ATCC VR-813 / DSM 19441 / 03DC25 / GPIC) (Chlamydophila caviae)).